We begin with the raw amino-acid sequence, 305 residues long: Cytoplasmic envelopment protein 1 (305 aa).

It belongs to the herpesviridae cytoplasmic envelopment protein 1 family.

It is found in the virion. The protein localises to the virion tegument. Its subcellular location is the host cytoplasm. The protein resides in the host Golgi apparatus. Its function is as follows. Plays a critical role in cytoplasmic virus egress. Participates in the final step of tegumentation and envelope acquisition within the host cytoplasm. The protein is Cytoplasmic envelopment protein 1 (MDV019) of Gallus gallus (Chicken).